A 563-amino-acid chain; its full sequence is Arginine--tRNA ligase (563 aa).

Residues 119-129 (ANPTGPLHVGR) carry the 'HIGH' region motif.

Belongs to the class-I aminoacyl-tRNA synthetase family.

It is found in the cytoplasm. The catalysed reaction is tRNA(Arg) + L-arginine + ATP = L-arginyl-tRNA(Arg) + AMP + diphosphate. This chain is Arginine--tRNA ligase, found in Methanocella arvoryzae (strain DSM 22066 / NBRC 105507 / MRE50).